The primary structure comprises 374 residues: Pectate lyase 3 (374 aa).

The first 22 residues, 1-22 (MKYLLPSTAAGLLLLAAQPTMA), serve as a signal peptide directing secretion. Cys93 and Cys176 are joined by a disulfide. Residues Asp150, Asp152, Glu187, and Asp191 each coordinate Ca(2+). Arg239 is a catalytic residue. The cysteines at positions 350 and 373 are disulfide-linked.

This sequence belongs to the polysaccharide lyase 1 family. PLADES subfamily. Requires Ca(2+) as cofactor.

It localises to the secreted. It catalyses the reaction Eliminative cleavage of (1-&gt;4)-alpha-D-galacturonan to give oligosaccharides with 4-deoxy-alpha-D-galact-4-enuronosyl groups at their non-reducing ends.. It participates in glycan metabolism; pectin degradation; 2-dehydro-3-deoxy-D-gluconate from pectin: step 2/5. In terms of biological role, involved in maceration and soft-rotting of plant tissue. This Pectobacterium atrosepticum (strain SCRI 1043 / ATCC BAA-672) (Erwinia carotovora subsp. atroseptica) protein is Pectate lyase 3 (pel3).